We begin with the raw amino-acid sequence, 285 residues long: Small ribosomal subunit protein uS5x (285 aa).

Positions 1-19 (MAERGGERGVERGGERGDF) are enriched in basic and acidic residues. The segment at 1-51 (MAERGGERGVERGGERGDFGRGFGGRGGRGDRGGRGRGGRGGRRGGRASEE) is disordered. Basic residues predominate over residues 35 to 46 (RGRGGRGGRRGG). In terms of domain architecture, S5 DRBM spans 96–159 (LKDEVMKIMP…ILAKLSVVPV (64 aa)).

This sequence belongs to the universal ribosomal protein uS5 family. Interacts with MBD6.

Component of the ribosome, a large ribonucleoprotein complex responsible for the synthesis of proteins in the cell. The small ribosomal subunit (SSU) binds messenger RNAs (mRNAs) and translates the encoded message by selecting cognate aminoacyl-transfer RNA (tRNA) molecules. The large subunit (LSU) contains the ribosomal catalytic site termed the peptidyl transferase center (PTC), which catalyzes the formation of peptide bonds, thereby polymerizing the amino acids delivered by tRNAs into a polypeptide chain. The nascent polypeptides leave the ribosome through a tunnel in the LSU and interact with protein factors that function in enzymatic processing, targeting, and the membrane insertion of nascent chains at the exit of the ribosomal tunnel. Plays a role in the assembly and function of the 40S ribosomal subunit. Mutations in this protein affects the control of translational fidelity. Involved in nucleolar processing of pre-18S ribosomal RNA and ribosome assembly. Also involved in RNA-directed DNA methylation (RdDM). This is Small ribosomal subunit protein uS5x from Arabidopsis thaliana (Mouse-ear cress).